The sequence spans 166 residues: Holin-like protein TcdE (166 aa).

4 helical membrane passes run 15 to 35, 36 to 56, 77 to 97, and 111 to 131; these read IFFYINLGGVMNMTISFLSEH, IFIKLVILTISFDTLLGCLSA, MIACIFFLSVVDILTKFNFLF, and HLGISEFFSILFILYESVSIL.

It belongs to the bacteriophage holin family. In terms of assembly, homomultimer.

It localises to the cell membrane. Its function is as follows. Holin-like protein required for secretion of toxins A and B (TcdA and TcdB). Facilitates the release of toxins to the extracellular environment without causing the bacterial cell lysis. Functionally, has weak activity, suggesting that it may act as a antiholin when multiple forms are produced. This is Holin-like protein TcdE from Clostridioides difficile (Peptoclostridium difficile).